The primary structure comprises 370 residues: Platelet-derived growth factor D (370 aa).

Residues 1-18 (MHRLIFVCTLVCANFCSC) form the signal peptide. Positions 52–170 (RDETIQVRGN…PGFKIYYSLL (119 aa)) constitute a CUB domain. Cysteine 109 and cysteine 131 are joined by a disulfide. Asparagine 276 carries an N-linked (GlcNAc...) asparagine glycan. Disulfide bonds link cysteine 302–cysteine 360 and cysteine 306–cysteine 362.

It belongs to the PDGF/VEGF growth factor family. In terms of assembly, homodimer; disulfide-linked. Interacts with PDGFRB homodimers, and with heterodimers formed by PDGFRA and PDGFRB. Post-translationally, activated by proteolytic cleavage. Proteolytic removal of the N-terminal CUB domain releasing the core domain is necessary for unmasking the receptor-binding epitopes of the core domain. Cleavage after Arg-247 or Arg-249 by urokinase plasminogen activator gives rise to the active form.

The protein resides in the secreted. Growth factor that plays an essential role in the regulation of embryonic development, cell proliferation, cell migration, survival and chemotaxis. Potent mitogen for cells of mesenchymal origin. Plays an important role in wound healing. Induces macrophage recruitment, increased interstitial pressure, and blood vessel maturation during angiogenesis. Can initiate events that lead to a mesangial proliferative glomerulonephritis, including influx of monocytes and macrophages and production of extracellular matrix. The chain is Platelet-derived growth factor D (PDGFD) from Pongo abelii (Sumatran orangutan).